The sequence spans 412 residues: Gamma-glutamyl phosphate reductase (412 aa).

Belongs to the gamma-glutamyl phosphate reductase family.

The protein resides in the cytoplasm. It carries out the reaction L-glutamate 5-semialdehyde + phosphate + NADP(+) = L-glutamyl 5-phosphate + NADPH + H(+). It participates in amino-acid biosynthesis; L-proline biosynthesis; L-glutamate 5-semialdehyde from L-glutamate: step 2/2. Its function is as follows. Catalyzes the NADPH-dependent reduction of L-glutamate 5-phosphate into L-glutamate 5-semialdehyde and phosphate. The product spontaneously undergoes cyclization to form 1-pyrroline-5-carboxylate. The sequence is that of Gamma-glutamyl phosphate reductase from Bartonella henselae (strain ATCC 49882 / DSM 28221 / CCUG 30454 / Houston 1) (Rochalimaea henselae).